The primary structure comprises 293 residues: Probable endonuclease 4 (293 aa).

9 residues coordinate Zn(2+): histidine 77, histidine 118, glutamate 153, aspartate 187, histidine 190, histidine 221, aspartate 234, histidine 236, and glutamate 266.

Belongs to the AP endonuclease 2 family. The cofactor is Zn(2+).

It catalyses the reaction Endonucleolytic cleavage to 5'-phosphooligonucleotide end-products.. Functionally, endonuclease IV plays a role in DNA repair. It cleaves phosphodiester bonds at apurinic or apyrimidinic (AP) sites, generating a 3'-hydroxyl group and a 5'-terminal sugar phosphate. The sequence is that of Probable endonuclease 4 from Mesoplasma florum (strain ATCC 33453 / NBRC 100688 / NCTC 11704 / L1) (Acholeplasma florum).